A 450-amino-acid polypeptide reads, in one-letter code: tRNA-2-methylthio-N(6)-dimethylallyladenosine synthase (450 aa).

The MTTase N-terminal domain occupies 14-132; the sequence is GEFFIETWGC…FPNYLNEVKK (119 aa). Positions 23, 59, 93, 169, 173, and 176 each coordinate [4Fe-4S] cluster. A Radical SAM core domain is found at 155-385; sequence RKNSMKAFVT…VEVLNEISAK (231 aa). The 63-residue stretch at 388 to 450 folds into the TRAM domain; sequence KAYEGKIEEV…NSFSLTGEEI (63 aa).

Belongs to the methylthiotransferase family. MiaB subfamily. Monomer. The cofactor is [4Fe-4S] cluster.

It is found in the cytoplasm. It carries out the reaction N(6)-dimethylallyladenosine(37) in tRNA + (sulfur carrier)-SH + AH2 + 2 S-adenosyl-L-methionine = 2-methylsulfanyl-N(6)-dimethylallyladenosine(37) in tRNA + (sulfur carrier)-H + 5'-deoxyadenosine + L-methionine + A + S-adenosyl-L-homocysteine + 2 H(+). In terms of biological role, catalyzes the methylthiolation of N6-(dimethylallyl)adenosine (i(6)A), leading to the formation of 2-methylthio-N6-(dimethylallyl)adenosine (ms(2)i(6)A) at position 37 in tRNAs that read codons beginning with uridine. This is tRNA-2-methylthio-N(6)-dimethylallyladenosine synthase from Clostridium botulinum (strain ATCC 19397 / Type A).